The following is a 472-amino-acid chain: L-fuculokinase (472 aa).

The protein belongs to the FGGY kinase family. It depends on a divalent metal cation as a cofactor.

It carries out the reaction L-fuculose + ATP = L-fuculose 1-phosphate + ADP + H(+). It participates in carbohydrate degradation; L-fucose degradation; L-lactaldehyde and glycerone phosphate from L-fucose: step 2/3. In terms of biological role, catalyzes the phosphorylation of L-fuculose. The protein is L-fuculokinase of Escherichia coli O157:H7.